Reading from the N-terminus, the 472-residue chain is UDP-N-acetylmuramate--L-alanine ligase (472 aa).

ATP is bound at residue glycine 123–threonine 129.

This sequence belongs to the MurCDEF family.

Its subcellular location is the cytoplasm. It catalyses the reaction UDP-N-acetyl-alpha-D-muramate + L-alanine + ATP = UDP-N-acetyl-alpha-D-muramoyl-L-alanine + ADP + phosphate + H(+). It functions in the pathway cell wall biogenesis; peptidoglycan biosynthesis. Cell wall formation. This chain is UDP-N-acetylmuramate--L-alanine ligase, found in Solibacter usitatus (strain Ellin6076).